Reading from the N-terminus, the 162-residue chain is Probable chemoreceptor glutamine deamidase CheD (162 aa).

Belongs to the CheD family.

The enzyme catalyses L-glutaminyl-[protein] + H2O = L-glutamyl-[protein] + NH4(+). Functionally, probably deamidates glutamine residues to glutamate on methyl-accepting chemotaxis receptors (MCPs), playing an important role in chemotaxis. This Clostridium botulinum (strain Eklund 17B / Type B) protein is Probable chemoreceptor glutamine deamidase CheD.